The following is a 181-amino-acid chain: Inner membrane-spanning protein YciB (181 aa).

The next 5 helical transmembrane spans lie at I22–F42, M50–D70, A72–S92, V118–F138, and F148–I168.

The protein belongs to the YciB family.

It localises to the cell inner membrane. Plays a role in cell envelope biogenesis, maintenance of cell envelope integrity and membrane homeostasis. The polypeptide is Inner membrane-spanning protein YciB (Shewanella denitrificans (strain OS217 / ATCC BAA-1090 / DSM 15013)).